A 598-amino-acid polypeptide reads, in one-letter code: DNA mismatch repair protein MutL (598 aa).

This sequence belongs to the DNA mismatch repair MutL/HexB family.

In terms of biological role, this protein is involved in the repair of mismatches in DNA. It is required for dam-dependent methyl-directed DNA mismatch repair. May act as a 'molecular matchmaker', a protein that promotes the formation of a stable complex between two or more DNA-binding proteins in an ATP-dependent manner without itself being part of a final effector complex. In Geotalea daltonii (strain DSM 22248 / JCM 15807 / FRC-32) (Geobacter daltonii), this protein is DNA mismatch repair protein MutL.